Here is a 178-residue protein sequence, read N- to C-terminus: ATP-dependent protease subunit HslV (178 aa).

Thr-5 is a catalytic residue. Residues Gly-161, Cys-164, and Thr-167 each contribute to the Na(+) site.

It belongs to the peptidase T1B family. HslV subfamily. A double ring-shaped homohexamer of HslV is capped on each side by a ring-shaped HslU homohexamer. The assembly of the HslU/HslV complex is dependent on binding of ATP.

The protein resides in the cytoplasm. It catalyses the reaction ATP-dependent cleavage of peptide bonds with broad specificity.. Its activity is regulated as follows. Allosterically activated by HslU binding. Its function is as follows. Protease subunit of a proteasome-like degradation complex believed to be a general protein degrading machinery. The sequence is that of ATP-dependent protease subunit HslV from Aliarcobacter butzleri (strain RM4018) (Arcobacter butzleri).